Consider the following 500-residue polypeptide: Protein-cysteine N-palmitoyltransferase Rasp (500 aa).

Helical transmembrane passes span 15 to 35 (IFVY…KIYG), 73 to 93 (GDFI…QGFI), 105 to 125 (FIGV…MVLL), 134 to 154 (IVSL…WILC), 206 to 226 (SLVQ…GPII), 243 to 263 (LGFV…QCAL), 293 to 313 (FMGQ…IAFA), 372 to 392 (LTFA…IWSI), 429 to 449 (LYAM…VYFI), and 461 to 481 (GAYL…YCFF). The active site involves His381.

The protein belongs to the membrane-bound acyltransferase family. HHAT subfamily.

It is found in the membrane. It carries out the reaction N-terminal L-cysteinyl-[protein] + hexadecanoyl-CoA = N-terminal N-hexadecanoyl-L-cysteinyl-[protein] + CoA + H(+). It catalyses the reaction N-terminal L-cysteinyl-[protein]-C-terminal glycyl cholesterol ester + hexadecanoyl-CoA = N-terminal N-hexadecanoyl-L-cysteinyl-[protein]-C-terminal glycyl cholesterol ester + CoA + H(+). In terms of biological role, required in hedgehog (hh) expressing cells for production of appropriate signaling activity in embryos and in the imaginal precursors of adult tissues. Acts within the secretory pathway to catalyze N-terminal palmitoylation of Hh; this lipid modification is required for the embryonic and larval patterning activities of the Hh signal. Not required for Wg signaling. This Drosophila melanogaster (Fruit fly) protein is Protein-cysteine N-palmitoyltransferase Rasp (rasp).